The sequence spans 562 residues: Delta-1-pyrroline-5-carboxylate dehydrogenase, mitochondrial (562 aa).

A mitochondrion-targeting transit peptide spans 1 to 23 (MLPLPSLRRSLLSHAWRGAGLRW). Lys30 is modified (N6-succinyllysine). A Phosphoserine modification is found at Ser43. Position 51 is an N6-acetyllysine (Lys51). Lys92, Lys98, Lys113, Lys129, and Lys174 each carry N6-acetyllysine; alternate. 5 positions are modified to N6-succinyllysine; alternate: Lys92, Lys98, Lys113, Lys129, and Lys174. NAD(+)-binding positions include Ser207, Lys232, and 285 to 289 (GSVPT). The Proton acceptor role is filled by Glu313. An N6-acetyllysine modification is found at Lys317. N6-succinyllysine is present on Lys346. The active-site Nucleophile is Cys347. At Lys357 the chain carries N6-acetyllysine; alternate. Lys357 carries the post-translational modification N6-succinyllysine; alternate. N6-acetyllysine occurs at positions 364 and 375. At Lys394 the chain carries N6-succinyllysine. Position 446 (Glu446) interacts with NAD(+). Lys461 bears the N6-acetyllysine mark. At Lys508 the chain carries N6-acetyllysine; alternate. Lys508 carries the N6-succinyllysine; alternate modification. Residue Ser512 participates in substrate binding. Residues Lys530 and Lys551 each carry the N6-acetyllysine modification.

It belongs to the aldehyde dehydrogenase family. Homodimer. Post-translationally, acetylation of Lys-98, Lys-113 and Lys-401 is observed in liver mitochondria from fasted mice but not from fed mice.

It is found in the mitochondrion matrix. It catalyses the reaction L-glutamate 5-semialdehyde + NAD(+) + H2O = L-glutamate + NADH + 2 H(+). It participates in amino-acid degradation; L-proline degradation into L-glutamate; L-glutamate from L-proline: step 2/2. Functionally, irreversible conversion of delta-1-pyrroline-5-carboxylate (P5C), derived either from proline or ornithine, to glutamate. This is a necessary step in the pathway interconnecting the urea and tricarboxylic acid cycles. The preferred substrate is glutamic gamma-semialdehyde, other substrates include succinic, glutaric and adipic semialdehydes. This is Delta-1-pyrroline-5-carboxylate dehydrogenase, mitochondrial (Aldh4a1) from Mus musculus (Mouse).